Here is a 223-residue protein sequence, read N- to C-terminus: Translation initiation factor 6 (223 aa).

Belongs to the eIF-6 family.

Its function is as follows. Binds to the 50S ribosomal subunit and prevents its association with the 30S ribosomal subunit to form the 70S initiation complex. The chain is Translation initiation factor 6 from Saccharolobus islandicus (strain Y.N.15.51 / Yellowstone #2) (Sulfolobus islandicus).